The following is a 940-amino-acid chain: Alanine--tRNA ligase (940 aa).

His-581, His-585, Cys-683, and His-687 together coordinate Zn(2+).

This sequence belongs to the class-II aminoacyl-tRNA synthetase family. Requires Zn(2+) as cofactor.

The protein resides in the cytoplasm. It carries out the reaction tRNA(Ala) + L-alanine + ATP = L-alanyl-tRNA(Ala) + AMP + diphosphate. Functionally, catalyzes the attachment of alanine to tRNA(Ala) in a two-step reaction: alanine is first activated by ATP to form Ala-AMP and then transferred to the acceptor end of tRNA(Ala). Also edits incorrectly charged Ser-tRNA(Ala) and Gly-tRNA(Ala) via its editing domain. The sequence is that of Alanine--tRNA ligase from Leptospira borgpetersenii serovar Hardjo-bovis (strain JB197).